Consider the following 625-residue polypeptide: Probable potassium transport system protein Kup (625 aa).

12 helical membrane-spanning segments follow: residues 13 to 33 (TALA…LYAL), 53 to 73 (ILSI…VAIV), 103 to 123 (IYMI…GIIT), 141 to 161 (VFDP…FLVQ), 172 to 192 (FGPI…HSVI), 206 to 226 (AIQF…AVVL), 250 to 270 (WFFV…ALLL), 282 to 302 (LLVP…ATVI), 340 to 360 (IYVP…ILIF), 369 to 389 (AYGL…AVFI), 400 to 420 (VLLL…ATSL), and 422 to 442 (ILSG…ILMT).

Belongs to the HAK/KUP transporter (TC 2.A.72) family.

Its subcellular location is the cell inner membrane. The catalysed reaction is K(+)(in) + H(+)(in) = K(+)(out) + H(+)(out). Transport of potassium into the cell. Likely operates as a K(+):H(+) symporter. The protein is Probable potassium transport system protein Kup of Acinetobacter baumannii (strain AYE).